The following is a 709-amino-acid chain: Fatty acid oxidation complex subunit alpha (709 aa).

The interval 1–188 is enoyl-CoA hydratase; sequence MEKTFNLTRR…KMGLVNDVVP (188 aa). The segment at 308-709 is 3-hydroxyacyl-CoA dehydrogenase; that stretch reads RKVKKAVILG…AMAAEKARFF (402 aa).

The protein in the N-terminal section; belongs to the enoyl-CoA hydratase/isomerase family. It in the central section; belongs to the 3-hydroxyacyl-CoA dehydrogenase family. As to quaternary structure, heterotetramer of two alpha chains (FadJ) and two beta chains (FadI).

It localises to the cytoplasm. It carries out the reaction a (3S)-3-hydroxyacyl-CoA = a (2E)-enoyl-CoA + H2O. The enzyme catalyses a 4-saturated-(3S)-3-hydroxyacyl-CoA = a (3E)-enoyl-CoA + H2O. It catalyses the reaction a (3S)-3-hydroxyacyl-CoA + NAD(+) = a 3-oxoacyl-CoA + NADH + H(+). The catalysed reaction is (3S)-3-hydroxybutanoyl-CoA = (3R)-3-hydroxybutanoyl-CoA. It functions in the pathway lipid metabolism; fatty acid beta-oxidation. In terms of biological role, catalyzes the formation of a hydroxyacyl-CoA by addition of water on enoyl-CoA. Also exhibits 3-hydroxyacyl-CoA epimerase and 3-hydroxyacyl-CoA dehydrogenase activities. The sequence is that of Fatty acid oxidation complex subunit alpha from Shewanella sp. (strain ANA-3).